A 295-amino-acid polypeptide reads, in one-letter code: Urease accessory protein UreD (295 aa).

It belongs to the UreD family. As to quaternary structure, ureD, UreF and UreG form a complex that acts as a GTP-hydrolysis-dependent molecular chaperone, activating the urease apoprotein by helping to assemble the nickel containing metallocenter of UreC. The UreE protein probably delivers the nickel.

The protein resides in the cytoplasm. Its function is as follows. Required for maturation of urease via the functional incorporation of the urease nickel metallocenter. This is Urease accessory protein UreD from Ralstonia nicotianae (strain ATCC BAA-1114 / GMI1000) (Ralstonia solanacearum).